A 295-amino-acid chain; its full sequence is tRNA-cytidine(32) 2-sulfurtransferase (295 aa).

The short motif at 63 to 68 (SGGKDS) is the PP-loop motif element. [4Fe-4S] cluster contacts are provided by Cys-138, Cys-141, and Cys-229.

This sequence belongs to the TtcA family. As to quaternary structure, homodimer. Requires Mg(2+) as cofactor. It depends on [4Fe-4S] cluster as a cofactor.

Its subcellular location is the cytoplasm. The catalysed reaction is cytidine(32) in tRNA + S-sulfanyl-L-cysteinyl-[cysteine desulfurase] + AH2 + ATP = 2-thiocytidine(32) in tRNA + L-cysteinyl-[cysteine desulfurase] + A + AMP + diphosphate + H(+). It participates in tRNA modification. Its function is as follows. Catalyzes the ATP-dependent 2-thiolation of cytidine in position 32 of tRNA, to form 2-thiocytidine (s(2)C32). The sulfur atoms are provided by the cysteine/cysteine desulfurase (IscS) system. In Mesorhizobium japonicum (strain LMG 29417 / CECT 9101 / MAFF 303099) (Mesorhizobium loti (strain MAFF 303099)), this protein is tRNA-cytidine(32) 2-sulfurtransferase.